We begin with the raw amino-acid sequence, 421 residues long: Putative aspartate aminotransferase, cytoplasmic 2 (421 aa).

K249 carries the post-translational modification N6-(pyridoxal phosphate)lysine.

This sequence belongs to the class-I pyridoxal-phosphate-dependent aminotransferase family. In terms of assembly, homodimer. The cofactor is pyridoxal 5'-phosphate.

The protein resides in the cytoplasm. It catalyses the reaction L-aspartate + 2-oxoglutarate = oxaloacetate + L-glutamate. In Homo sapiens (Human), this protein is Putative aspartate aminotransferase, cytoplasmic 2 (GOT1L1).